We begin with the raw amino-acid sequence, 645 residues long: 1,4-alpha-glucan branching enzyme GlgB (645 aa).

Residue Asp309 is the Nucleophile of the active site. Catalysis depends on Glu352, which acts as the Proton donor. The interval 621–645 (MRKGSKKQDGKKAELRSNATSRRKR) is disordered. Basic and acidic residues predominate over residues 626–635 (KKQDGKKAEL).

The protein belongs to the glycosyl hydrolase 13 family. GlgB subfamily. In terms of assembly, monomer.

The catalysed reaction is Transfers a segment of a (1-&gt;4)-alpha-D-glucan chain to a primary hydroxy group in a similar glucan chain.. The protein operates within glycan biosynthesis; glycogen biosynthesis. In terms of biological role, catalyzes the formation of the alpha-1,6-glucosidic linkages in glycogen by scission of a 1,4-alpha-linked oligosaccharide from growing alpha-1,4-glucan chains and the subsequent attachment of the oligosaccharide to the alpha-1,6 position. In Bacillus cytotoxicus (strain DSM 22905 / CIP 110041 / 391-98 / NVH 391-98), this protein is 1,4-alpha-glucan branching enzyme GlgB.